Consider the following 383-residue polypeptide: Chorismate synthase (383 aa).

Arg-48 serves as a coordination point for NADP(+). FMN-binding positions include 125 to 127 (RSS), Gly-286, 301 to 305 (HAPTS), and Arg-328. Residues 361–383 (PDRLDDNPGQYETEYHPSSPQTN) form a disordered region.

The protein belongs to the chorismate synthase family. It depends on FMNH2 as a cofactor.

The catalysed reaction is 5-O-(1-carboxyvinyl)-3-phosphoshikimate = chorismate + phosphate. It functions in the pathway metabolic intermediate biosynthesis; chorismate biosynthesis; chorismate from D-erythrose 4-phosphate and phosphoenolpyruvate: step 7/7. In terms of biological role, catalyzes the anti-1,4-elimination of the C-3 phosphate and the C-6 proR hydrogen from 5-enolpyruvylshikimate-3-phosphate (EPSP) to yield chorismate, which is the branch point compound that serves as the starting substrate for the three terminal pathways of aromatic amino acid biosynthesis. This reaction introduces a second double bond into the aromatic ring system. The polypeptide is Chorismate synthase (Haloquadratum walsbyi (strain DSM 16790 / HBSQ001)).